A 273-amino-acid polypeptide reads, in one-letter code: Ribosomal RNA small subunit methyltransferase A (273 aa).

N20, L22, G47, E68, D90, and N110 together coordinate S-adenosyl-L-methionine.

Belongs to the class I-like SAM-binding methyltransferase superfamily. rRNA adenine N(6)-methyltransferase family. RsmA subfamily.

The protein resides in the cytoplasm. The enzyme catalyses adenosine(1518)/adenosine(1519) in 16S rRNA + 4 S-adenosyl-L-methionine = N(6)-dimethyladenosine(1518)/N(6)-dimethyladenosine(1519) in 16S rRNA + 4 S-adenosyl-L-homocysteine + 4 H(+). Its function is as follows. Specifically dimethylates two adjacent adenosines (A1518 and A1519) in the loop of a conserved hairpin near the 3'-end of 16S rRNA in the 30S particle. May play a critical role in biogenesis of 30S subunits. This Chlorobium luteolum (strain DSM 273 / BCRC 81028 / 2530) (Pelodictyon luteolum) protein is Ribosomal RNA small subunit methyltransferase A.